The following is a 239-amino-acid chain: Aspartate/glutamate leucyltransferase (239 aa).

This sequence belongs to the R-transferase family. Bpt subfamily.

The protein localises to the cytoplasm. The catalysed reaction is N-terminal L-glutamyl-[protein] + L-leucyl-tRNA(Leu) = N-terminal L-leucyl-L-glutamyl-[protein] + tRNA(Leu) + H(+). The enzyme catalyses N-terminal L-aspartyl-[protein] + L-leucyl-tRNA(Leu) = N-terminal L-leucyl-L-aspartyl-[protein] + tRNA(Leu) + H(+). Functions in the N-end rule pathway of protein degradation where it conjugates Leu from its aminoacyl-tRNA to the N-termini of proteins containing an N-terminal aspartate or glutamate. The polypeptide is Aspartate/glutamate leucyltransferase (Campylobacter jejuni (strain RM1221)).